The primary structure comprises 432 residues: 3-phosphoshikimate 1-carboxyvinyltransferase (432 aa).

3-phosphoshikimate contacts are provided by K25, S26, and R30. K25 is a binding site for phosphoenolpyruvate. G97 and R125 together coordinate phosphoenolpyruvate. Residues S170, Q172, D318, and K345 each coordinate 3-phosphoshikimate. Residue Q172 coordinates phosphoenolpyruvate. The active-site Proton acceptor is D318. Positions 349 and 393 each coordinate phosphoenolpyruvate.

It belongs to the EPSP synthase family. In terms of assembly, monomer.

The protein localises to the cytoplasm. It catalyses the reaction 3-phosphoshikimate + phosphoenolpyruvate = 5-O-(1-carboxyvinyl)-3-phosphoshikimate + phosphate. It functions in the pathway metabolic intermediate biosynthesis; chorismate biosynthesis; chorismate from D-erythrose 4-phosphate and phosphoenolpyruvate: step 6/7. Its function is as follows. Catalyzes the transfer of the enolpyruvyl moiety of phosphoenolpyruvate (PEP) to the 5-hydroxyl of shikimate-3-phosphate (S3P) to produce enolpyruvyl shikimate-3-phosphate and inorganic phosphate. This is 3-phosphoshikimate 1-carboxyvinyltransferase from Geobacillus thermodenitrificans (strain NG80-2).